The chain runs to 468 residues: UDP-N-acetylmuramate--L-alanine ligase (468 aa).

Residue 112–118 coordinates ATP; that stretch reads GTHGKTT.

Belongs to the MurCDEF family.

It is found in the cytoplasm. The enzyme catalyses UDP-N-acetyl-alpha-D-muramate + L-alanine + ATP = UDP-N-acetyl-alpha-D-muramoyl-L-alanine + ADP + phosphate + H(+). It functions in the pathway cell wall biogenesis; peptidoglycan biosynthesis. Cell wall formation. In Bordetella pertussis (strain Tohama I / ATCC BAA-589 / NCTC 13251), this protein is UDP-N-acetylmuramate--L-alanine ligase.